We begin with the raw amino-acid sequence, 341 residues long: Hyaluronan and proteoglycan link protein 2 (341 aa).

An N-terminal signal peptide occupies residues 1 to 27; it reads MPSWIPLPAFCCLLLPWAFTVFHKTLG. Positions 35 to 143 constitute an Ig-like V-type domain; it reads PHYLLPPIHE…GIEDESVALT (109 aa). Disulfide bonds link C58/C129, C171/C241, C195/C216, C266/C337, and C291/C312. Link domains lie at 149-243 and 246-339; these read VVFP…FCFT and LAGQ…YCYA.

This sequence belongs to the HAPLN family. Brain.

It is found in the secreted. It localises to the extracellular space. Its subcellular location is the extracellular matrix. Mediates a firm binding of versican V2 to hyaluronic acid. May play a pivotal role in the formation of the hyaluronan-associated matrix in the central nervous system (CNS) which facilitates neuronal conduction and general structural stabilization. Binds to hyaluronic acid. The polypeptide is Hyaluronan and proteoglycan link protein 2 (Hapln2) (Rattus norvegicus (Rat)).